The sequence spans 332 residues: Holliday junction branch migration complex subunit RuvB (332 aa).

The tract at residues 1–181 (MSRILDNEMM…FGITGHMEYY (181 aa)) is large ATPase domain (RuvB-L). ATP is bound by residues Leu20, Arg21, Gly62, Lys65, Thr66, Thr67, 128–130 (EDF), Arg171, Tyr181, and Arg218. Thr66 is a Mg(2+) binding site. The small ATPAse domain (RuvB-S) stretch occupies residues 182–252 (AHADLTEIVE…ITDKALTMLD (71 aa)). A head domain (RuvB-H) region spans residues 255 to 332 (HEGLDYVDQK…EHLGYEYSEK (78 aa)). Arg291, Arg310, Arg312, and Arg315 together coordinate DNA.

This sequence belongs to the RuvB family. As to quaternary structure, homohexamer. Forms an RuvA(8)-RuvB(12)-Holliday junction (HJ) complex. HJ DNA is sandwiched between 2 RuvA tetramers; dsDNA enters through RuvA and exits via RuvB. An RuvB hexamer assembles on each DNA strand where it exits the tetramer. Each RuvB hexamer is contacted by two RuvA subunits (via domain III) on 2 adjacent RuvB subunits; this complex drives branch migration. In the full resolvosome a probable DNA-RuvA(4)-RuvB(12)-RuvC(2) complex forms which resolves the HJ.

The protein localises to the cytoplasm. The catalysed reaction is ATP + H2O = ADP + phosphate + H(+). Its function is as follows. The RuvA-RuvB-RuvC complex processes Holliday junction (HJ) DNA during genetic recombination and DNA repair, while the RuvA-RuvB complex plays an important role in the rescue of blocked DNA replication forks via replication fork reversal (RFR). RuvA specifically binds to HJ cruciform DNA, conferring on it an open structure. The RuvB hexamer acts as an ATP-dependent pump, pulling dsDNA into and through the RuvAB complex. RuvB forms 2 homohexamers on either side of HJ DNA bound by 1 or 2 RuvA tetramers; 4 subunits per hexamer contact DNA at a time. Coordinated motions by a converter formed by DNA-disengaged RuvB subunits stimulates ATP hydrolysis and nucleotide exchange. Immobilization of the converter enables RuvB to convert the ATP-contained energy into a lever motion, pulling 2 nucleotides of DNA out of the RuvA tetramer per ATP hydrolyzed, thus driving DNA branch migration. The RuvB motors rotate together with the DNA substrate, which together with the progressing nucleotide cycle form the mechanistic basis for DNA recombination by continuous HJ branch migration. Branch migration allows RuvC to scan DNA until it finds its consensus sequence, where it cleaves and resolves cruciform DNA. The polypeptide is Holliday junction branch migration complex subunit RuvB (Streptococcus pneumoniae serotype 19F (strain G54)).